The chain runs to 511 residues: Mediator of RNA polymerase II transcription subunit 17 (511 aa).

Belongs to the Mediator complex subunit 17 family. As to quaternary structure, component of the Mediator complex.

The protein localises to the nucleus. Its function is as follows. Component of the Mediator complex, a coactivator involved in the regulated transcription of nearly all RNA polymerase II-dependent genes. Mediator functions as a bridge to convey information from gene-specific regulatory proteins to the basal RNA polymerase II transcription machinery. Mediator is recruited to promoters by direct interactions with regulatory proteins and serves as a scaffold for the assembly of a functional preinitiation complex with RNA polymerase II and the general transcription factors. The polypeptide is Mediator of RNA polymerase II transcription subunit 17 (SRB4) (Yarrowia lipolytica (strain CLIB 122 / E 150) (Yeast)).